Here is a 239-residue protein sequence, read N- to C-terminus: Small ribosomal subunit protein eS6A (239 aa).

2 positions are modified to phosphoserine: Ser-235 and Ser-236.

The protein belongs to the eukaryotic ribosomal protein eS6 family. As to quaternary structure, component of the small ribosomal subunit (SSU). Mature yeast ribosomes consist of a small (40S) and a large (60S) subunit. The 40S small subunit contains 1 molecule of ribosomal RNA (18S rRNA) and at least 33 different proteins. The large 60S subunit contains 3 rRNA molecules (25S, 5.8S and 5S rRNA) and at least 46 different proteins. Interacts with snoRNA U3. uS11 interacts with MPP10. Component of the ribosomal small subunit (SSU) processome composed of at least 40 protein subunits and snoRNA U3. In terms of processing, phosphorylated.

The protein resides in the cytoplasm. In terms of biological role, component of the ribosome, a large ribonucleoprotein complex responsible for the synthesis of proteins in the cell. The small ribosomal subunit (SSU) binds messenger RNAs (mRNAs) and translates the encoded message by selecting cognate aminoacyl-transfer RNA (tRNA) molecules. The large subunit (LSU) contains the ribosomal catalytic site termed the peptidyl transferase center (PTC), which catalyzes the formation of peptide bonds, thereby polymerizing the amino acids delivered by tRNAs into a polypeptide chain. The nascent polypeptides leave the ribosome through a tunnel in the LSU and interact with protein factors that function in enzymatic processing, targeting, and the membrane insertion of nascent chains at the exit of the ribosomal tunnel. eS6 is involved in nucleolar processing of pre-18S ribosomal RNA and ribosome assembly. The protein is Small ribosomal subunit protein eS6A (rps601) of Schizosaccharomyces pombe (strain 972 / ATCC 24843) (Fission yeast).